The following is a 353-amino-acid chain: Fasciculation and elongation protein zeta-2 (353 aa).

The interval 19-49 is disordered; the sequence is SLLDQENCNASPEPGAEAGAEAGGGADGFPA. Residues 28–38 show a composition bias toward low complexity; sequence ASPEPGAEAGA. 3 positions are modified to phosphoserine: S135, S176, and S195. A coiled-coil region spans residues 214–286; the sequence is KRLSVSELNE…AKKKKKLKNG (73 aa). Residues 271–300 are disordered; the sequence is KEHKETAKKKKKLKNGSSQNGKNERSHMPG.

It belongs to the zygin family. As to quaternary structure, homodimer; disulfide-linked. May form heterodimers with FEZ1. Interacts with synaptotagmin. Expressed in nonneural tissues, such as heart, lung, spleen, muscle, testis, placenta and melanocytes.

In terms of biological role, involved in axonal outgrowth and fasciculation. This chain is Fasciculation and elongation protein zeta-2 (FEZ2), found in Homo sapiens (Human).